The chain runs to 484 residues: Nuclear rim protein 1 (484 aa).

Ser3 carries the phosphoserine modification. The next 2 membrane-spanning stretches (helical) occupy residues 145-165 and 252-272; these read FTIFILLSLNLYVSCKFMFGY and TAIVFLSFSDVSFTSAIAIVF. A disordered region spans residues 416 to 457; that stretch reads SSNENLEKGGAFLPNQDQNRPSKSLSPLRKTPLSARQKRFEG. Ser417 carries the post-translational modification Phosphoserine. The segment covering 430–440 has biased composition (polar residues); it reads NQDQNRPSKSL. Ser474 is modified (phosphoserine).

Belongs to the NUR1 family. As to quaternary structure, interacts with CSM1.

The protein localises to the nucleus membrane. In terms of biological role, member of a perinuclear network that controls recombination at multiple loci to maintain genome stability. Required for rDNA repeat stability. In Saccharomyces cerevisiae (strain Lalvin EC1118 / Prise de mousse) (Baker's yeast), this protein is Nuclear rim protein 1 (NUR1).